A 1755-amino-acid chain; its full sequence is Transposon Ty1-PL Gag-Pol polyprotein (1755 aa).

Composition is skewed to polar residues over residues Met1–Ser23, Thr48–Ser60, and Gln127–Phe152. Disordered regions lie at residues Met1 to Gln93, Pro126 to Met174, and Gly352 to Thr421. Positions Thr153–Thr165 are enriched in low complexity. The segment at Asn299–His401 is RNA-binding. Residues Asn402–Ser418 are compositionally biased toward low complexity. Ser416 carries the post-translational modification Phosphoserine. The active-site For protease activity; shared with dimeric partner is the Asp461. Positions Asn583–Cys640 are integrase-type zinc finger-like. Residues Asn660 to Pro835 enclose the Integrase catalytic domain. Asp671 and Asp736 together coordinate Mg(2+). Disordered stretches follow at residues Ser956–Lys1087, Arg1092–Pro1111, and Asp1130–Thr1187. Positions Ser960–Thr969 are enriched in low complexity. Polar residues predominate over residues Ser1005 to Thr1015. Residues Glu1038–Ser1053 show a composition bias toward basic and acidic residues. Polar residues-rich tracts occupy residues Tyr1054–Asp1082 and Pro1101–Pro1111. A Bipartite nuclear localization signal motif is present at residues Lys1178–Arg1212. Residues Asn1338 to Gln1476 enclose the Reverse transcriptase Ty1/copia-type domain. Mg(2+) is bound by residues Asp1346, Asp1427, Asp1428, Asp1610, Glu1652, and Asp1685. The region spanning Asp1610–Lys1752 is the RNase H Ty1/copia-type domain.

In terms of assembly, the capsid protein forms a homotrimer, from which the VLPs are assembled. The protease is a homodimer, whose active site consists of two apposed aspartic acid residues. Post-translationally, initially, virus-like particles (VLPs) are composed of the structural unprocessed proteins Gag and Gag-Pol, and also contain the host initiator methionine tRNA (tRNA(i)-Met) which serves as a primer for minus-strand DNA synthesis, and a dimer of genomic Ty RNA. Processing of the polyproteins occurs within the particle and proceeds by an ordered pathway, called maturation. First, the protease (PR) is released by autocatalytic cleavage of the Gag-Pol polyprotein yielding capsid protein p45 and a Pol-p154 precursor protein. This cleavage is a prerequisite for subsequent processing of Pol-p154 at the remaining sites to release the mature structural and catalytic proteins. Maturation takes place prior to the RT reaction and is required to produce transposition-competent VLPs.

The protein localises to the cytoplasm. It is found in the nucleus. The catalysed reaction is DNA(n) + a 2'-deoxyribonucleoside 5'-triphosphate = DNA(n+1) + diphosphate. It catalyses the reaction Endonucleolytic cleavage to 5'-phosphomonoester.. Capsid protein (CA) is the structural component of the virus-like particle (VLP), forming the shell that encapsulates the retrotransposons dimeric RNA genome. The particles are assembled from trimer-clustered units and there are holes in the capsid shells that allow for the diffusion of macromolecules. CA also has nucleocapsid-like chaperone activity, promoting primer tRNA(i)-Met annealing to the multipartite primer-binding site (PBS), dimerization of Ty1 RNA and initiation of reverse transcription. Its function is as follows. The aspartyl protease (PR) mediates the proteolytic cleavages of the Gag and Gag-Pol polyproteins after assembly of the VLP. In terms of biological role, reverse transcriptase/ribonuclease H (RT) is a multifunctional enzyme that catalyzes the conversion of the retro-elements RNA genome into dsDNA within the VLP. The enzyme displays a DNA polymerase activity that can copy either DNA or RNA templates, and a ribonuclease H (RNase H) activity that cleaves the RNA strand of RNA-DNA heteroduplexes during plus-strand synthesis and hydrolyzes RNA primers. The conversion leads to a linear dsDNA copy of the retrotransposon that includes long terminal repeats (LTRs) at both ends. Functionally, integrase (IN) targets the VLP to the nucleus, where a subparticle preintegration complex (PIC) containing at least integrase and the newly synthesized dsDNA copy of the retrotransposon must transit the nuclear membrane. Once in the nucleus, integrase performs the integration of the dsDNA into the host genome. In Saccharomyces cerevisiae (strain ATCC 204508 / S288c) (Baker's yeast), this protein is Transposon Ty1-PL Gag-Pol polyprotein (TY1B-PL).